The chain runs to 375 residues: Aminomethyltransferase (375 aa).

This sequence belongs to the GcvT family. The glycine cleavage system is composed of four proteins: P, T, L and H.

The enzyme catalyses N(6)-[(R)-S(8)-aminomethyldihydrolipoyl]-L-lysyl-[protein] + (6S)-5,6,7,8-tetrahydrofolate = N(6)-[(R)-dihydrolipoyl]-L-lysyl-[protein] + (6R)-5,10-methylene-5,6,7,8-tetrahydrofolate + NH4(+). Functionally, the glycine cleavage system catalyzes the degradation of glycine. The sequence is that of Aminomethyltransferase from Cupriavidus necator (strain ATCC 17699 / DSM 428 / KCTC 22496 / NCIMB 10442 / H16 / Stanier 337) (Ralstonia eutropha).